Here is a 396-residue protein sequence, read N- to C-terminus: Tryptophan synthase beta chain (396 aa).

K86 bears the N6-(pyridoxal phosphate)lysine mark.

It belongs to the TrpB family. In terms of assembly, tetramer of two alpha and two beta chains. Pyridoxal 5'-phosphate serves as cofactor.

The enzyme catalyses (1S,2R)-1-C-(indol-3-yl)glycerol 3-phosphate + L-serine = D-glyceraldehyde 3-phosphate + L-tryptophan + H2O. It functions in the pathway amino-acid biosynthesis; L-tryptophan biosynthesis; L-tryptophan from chorismate: step 5/5. In terms of biological role, the beta subunit is responsible for the synthesis of L-tryptophan from indole and L-serine. The polypeptide is Tryptophan synthase beta chain (Vibrio atlanticus (strain LGP32) (Vibrio splendidus (strain Mel32))).